We begin with the raw amino-acid sequence, 221 residues long: Coiled-coil domain-containing protein 70 (221 aa).

A coiled-coil region spans residues 129 to 168 (NALWEKDRNLLQEDKALWEEEKALWVEERALLEEEKALWE).

This Macaca fascicularis (Crab-eating macaque) protein is Coiled-coil domain-containing protein 70 (CCDC70).